The chain runs to 224 residues: UPF0758 protein VV1_0825 (224 aa).

Positions 1 to 20 are disordered; sequence MSLKNLPSESMPREKLLQRG. The MPN domain occupies 102–224; sequence ALTSPQHTKL…VVSFAERGWI (123 aa). His173, His175, and Asp186 together coordinate Zn(2+). Positions 173 to 186 match the JAMM motif motif; that stretch reads HNHPSGVAEPSQAD.

The protein belongs to the UPF0758 family.

This chain is UPF0758 protein VV1_0825, found in Vibrio vulnificus (strain CMCP6).